The sequence spans 63 residues: Anionic peptide 10.1 (63 aa).

The N-terminal stretch at 1–20 (MISRFCLLFLLVFVVSKIQA) is a signal peptide.

This sequence belongs to the non-disulfide-bridged peptide (NDBP) superfamily. Long chain multifunctional peptide (group 2) family. As to expression, expressed by the venom gland.

It is found in the secreted. The chain is Anionic peptide 10.1 from Lychas mucronatus (Chinese swimming scorpion).